Here is a 341-residue protein sequence, read N- to C-terminus: HTH-type sugar sensing transcriptional regulator TrmBL1 (341 aa).

The segment at residues 32–53 (SKATDVTKESGIPHTRIYDVLS) is a DNA-binding region (H-T-H motif).

Belongs to the transcriptional regulator TrmB family. Homotetramer. Forms homooctamers in the presence of maltotriose or maltose.

Repressor activity is regulated by binding of different sugars to TrmBL1. Binding of maltose and maltotriose results in derepression of the target genes. However, high sugar concentration results in formation of octamers with high affinity for DNA, which may prevent transcription of target genes. In terms of biological role, global transcriptional repressor of the maltodextrin transport gene cluster (mdxE operon) and most likely of all genes encoding glycolytic enzymes. Acts by binding to the conserved TGM (Thermococcales-Glycolytic-Motif) sequences in their promoter region. Can also interact with non-TGM sequences. This chain is HTH-type sugar sensing transcriptional regulator TrmBL1 (trmBL1), found in Pyrococcus furiosus (strain ATCC 43587 / DSM 3638 / JCM 8422 / Vc1).